The following is a 151-amino-acid chain: Melatonin receptor type 1C (151 aa).

At 1-13 (CHSLRYDRLYSRR) the chain is on the cytoplasmic side. Residues 14-34 (NTCLYLLLTWMLTALATVPNF) traverse the membrane as a helical segment. The Extracellular portion of the chain corresponds to 35-58 (LVGSLKYDPRVFSCTFTQTASSSY). Residues 59 to 79 (TVCVVLIHFLVPLGVVSFCYL) traverse the membrane as a helical segment. The Cytoplasmic portion of the chain corresponds to 80–109 (RIWTLVIRVKGRVRPNPKVRAADLRNFLTM). Residues 110-130 (FVVFVLFAVCWAPLNFIGLAV) traverse the membrane as a helical segment. Over 131–143 (AINPAKVAPNIPE) the chain is Extracellular. Residues 144–151 (WLFVTSYF) traverse the membrane as a helical segment.

Belongs to the G-protein coupled receptor 1 family.

It is found in the cell membrane. High affinity receptor for melatonin. The activity of this receptor is mediated by pertussis toxin sensitive G proteins that inhibits adenylate cyclase activity. This Danio rerio (Zebrafish) protein is Melatonin receptor type 1C (mtnr1c).